The following is a 271-amino-acid chain: Tryptophan synthase alpha chain (271 aa).

Catalysis depends on proton acceptor residues Glu-49 and Asp-60.

It belongs to the TrpA family. As to quaternary structure, tetramer of two alpha and two beta chains.

It catalyses the reaction (1S,2R)-1-C-(indol-3-yl)glycerol 3-phosphate + L-serine = D-glyceraldehyde 3-phosphate + L-tryptophan + H2O. It functions in the pathway amino-acid biosynthesis; L-tryptophan biosynthesis; L-tryptophan from chorismate: step 5/5. Functionally, the alpha subunit is responsible for the aldol cleavage of indoleglycerol phosphate to indole and glyceraldehyde 3-phosphate. In Burkholderia multivorans (strain ATCC 17616 / 249), this protein is Tryptophan synthase alpha chain.